Here is a 265-residue protein sequence, read N- to C-terminus: 3-methyl-2-oxobutanoate hydroxymethyltransferase (265 aa).

Residues aspartate 46 and aspartate 85 each contribute to the Mg(2+) site. Residues 46 to 47, aspartate 85, and lysine 114 contribute to the 3-methyl-2-oxobutanoate site; that span reads DS. Glutamate 116 is a binding site for Mg(2+). Residue glutamate 183 is the Proton acceptor of the active site.

Belongs to the PanB family. In terms of assembly, homodecamer; pentamer of dimers. The cofactor is Mg(2+).

It localises to the cytoplasm. The catalysed reaction is 3-methyl-2-oxobutanoate + (6R)-5,10-methylene-5,6,7,8-tetrahydrofolate + H2O = 2-dehydropantoate + (6S)-5,6,7,8-tetrahydrofolate. The protein operates within cofactor biosynthesis; coenzyme A biosynthesis. Functionally, catalyzes the reversible reaction in which hydroxymethyl group from 5,10-methylenetetrahydrofolate is transferred onto alpha-ketoisovalerate to form ketopantoate. This Caldivirga maquilingensis (strain ATCC 700844 / DSM 13496 / JCM 10307 / IC-167) protein is 3-methyl-2-oxobutanoate hydroxymethyltransferase.